The primary structure comprises 233 residues: Transmembrane protein 40 (233 aa).

An N-acetylmethionine modification is found at M1. A compositionally biased stretch (polar residues) spans 1–14; that stretch reads METSASSSQPQDNS. The tract at residues 1–143 is disordered; that stretch reads METSASSSQP…RRGSDPASGE (143 aa). Residues 50-70 show a composition bias toward low complexity; the sequence is SSSSSSSSSSSSSSSSSSSSS. Over residues 93 to 104 the composition is skewed to gly residues; that stretch reads YPHGNGSPGPGH. Over residues 105-114 the composition is skewed to basic and acidic residues; sequence GEPDVLKDEL. Residue S137 is modified to Phosphoserine. Helical transmembrane passes span 160-180 and 187-207; these read FFHF…YHYY and LGVG…FGLV.

The protein localises to the membrane. This Homo sapiens (Human) protein is Transmembrane protein 40 (TMEM40).